The chain runs to 3317 residues: Cadherin-23 (3317 aa).

The first 23 residues, 1–23, serve as a signal peptide directing secretion; that stretch reads MRHPPVTWCAMLWLLMLVSGSWG. At 24-3062 the chain is on the extracellular side; it reads QVNRLPFFTN…SVQLPDDMSA (3039 aa). Cadherin domains follow at residues 34–132, 133–236, 237–348, 349–458, 459–559, 560–669, 670–782, 777–888, 889–993, 994–1100, 1101–1206, 1208–1311, 1312–1416, 1418–1525, 1527–1632, 1633–1742, 1743–1849, 1850–1957, 1958–2067, 2068–2172, 2173–2291, 2295–2400, 2401–2507, 2508–2609, 2612–2720, 2727–2844, and 2845–2973; these read HFFD…APTF, HNQP…DPIF, INLP…APEF, NSSE…RPIF, SQPL…VPTF, QKDA…PPTF, SKPA…APYY, KDAP…DPTF, QNLP…TPTF, FPAV…RPIF, LQSS…APVF, QQQY…AVQF, SNAS…SPRF, FTSD…PPVI, SPFG…APVF, QQPH…VPTF, PRDY…DPVL, LNLP…HPLF, TEGT…WPTF, SPPA…RPEF, LNPI…TPQF, GITY…NPIF, DQLS…RPQF, SKPQ…RPVF, PPNG…EPLF, SPQY…PPRF, and TKAE…EEEF. Residues Asn155 and Asn206 are each glycosylated (N-linked (GlcNAc...) asparagine). N-linked (GlcNAc...) asparagine glycosylation is found at Asn349, Asn391, Asn432, Asn464, Asn470, Asn600, Asn692, Asn763, Asn808, Asn825, Asn939, Asn999, Asn1016, Asn1169, Asn1280, Asn1313, Asn1471, Asn1532, Asn1649, Asn1665, Asn1816, Asn1855, Asn1887, Asn1900, Asn2012, Asn2048, Asn2127, Asn2166, Asn2193, Asn2261, Asn2355, and Asn2367. N-linked (GlcNAc...) asparagine glycosylation is found at Asn2576, Asn2614, Asn2747, Asn2806, Asn2875, Asn2894, Asn2939, and Asn2979. The chain crosses the membrane as a helical span at residues 3063–3083; sequence LQMAIIVLAILLFLAAMLFVL. The Cytoplasmic segment spans residues 3084–3317; sequence MNWYYRTIHK…MESPLEITEL (234 aa).

In terms of assembly, antiparallel heterodimer with PCDH15. Interacts with USH1C and USH1G.

The protein localises to the cell membrane. Its function is as follows. Cadherins are calcium-dependent cell adhesion proteins. They preferentially interact with themselves in a homophilic manner in connecting cells. CDH23 is required for establishing and/or maintaining the proper organization of the stereocilia bundle of hair cells in the cochlea and the vestibule during late embryonic/early postnatal development. It is part of the functional network formed by USH1C, USH1G, CDH23 and MYO7A that mediates mechanotransduction in cochlear hair cells. Required for normal hearing. The sequence is that of Cadherin-23 (Cdh23) from Rattus norvegicus (Rat).